The following is a 135-amino-acid chain: UPF0102 protein PGN_1801 (135 aa).

Belongs to the UPF0102 family.

This chain is UPF0102 protein PGN_1801, found in Porphyromonas gingivalis (strain ATCC 33277 / DSM 20709 / CIP 103683 / JCM 12257 / NCTC 11834 / 2561).